The following is a 1100-amino-acid chain: Guanylate cyclase 2G (1100 aa).

Positions 1 to 43 (MASRARSEPPLEHRFYGGAESHAGHSSLVLTLFVVMLMTCLEA) are cleaved as a signal peptide. Over 44-481 (AKLTVGFHAP…GAGMTASVTA (438 aa)) the chain is Extracellular. N-linked (GlcNAc...) asparagine glycans are attached at residues N55, N85, N94, N418, and N443. The helical transmembrane segment at 482 to 502 (VIPTVTLLVVASAAAITGLML) threads the bilayer. The Cytoplasmic portion of the chain corresponds to 503–1100 (WRLRGKVQNH…EEEAKVPEIL (598 aa)). The Protein kinase domain maps to 549 to 826 (STVKISADCG…PAFPSIKKTL (278 aa)). The Guanylate cyclase domain occupies 901 to 1031 (TIFFSDIVGF…DTVNMASRME (131 aa)).

Belongs to the adenylyl cyclase class-4/guanylyl cyclase family. In terms of assembly, homooligomer. May interact with NPR1/GC-A. Post-translationally, N-glycosylated. Expressed in lung, kidney and skeletal muscle. Low levels in intestine.

It is found in the cell membrane. The protein localises to the cytoplasm. It carries out the reaction GTP = 3',5'-cyclic GMP + diphosphate. This chain is Guanylate cyclase 2G (Gucy2g), found in Rattus norvegicus (Rat).